A 795-amino-acid polypeptide reads, in one-letter code: Phospholipase A-2-activating protein (795 aa).

7 WD repeats span residues 17 to 56 (HELD…RSFT), 63 to 107 (GHSN…PLYI), 110 to 148 (GHKN…MTLQ), 149 to 188 (GHTA…RTFS), 190 to 227 (HEDC…LEVY), 229 to 268 (GHTN…QTIR), and 270 to 307 (PAQS…TASA). Phosphoserine is present on Ser-50. The region spanning 366–465 (QWSVSEGRWI…KGQMLGLGNP (100 aa)) is the PFU domain. Residue Lys-529 is modified to N6-acetyllysine. The 262-residue stretch at 533–794 (IYFPKKEAVT…SECCRFILNL (262 aa)) folds into the PUL domain. 6 ARM repeats span residues 546–588 (ANPT…NSSS), 589–620 (EKPT…LRLS), 621–669 (IKHP…CFVG), 670–715 (QAGQ…CFHK), 716–755 (DHNI…LISD), and 756–795 (DSNA…LNLL).

Belongs to the WD repeat PLAP family. As to quaternary structure, interacts with ubiquitin. Interacts with UBXN6, VCP and YOD1; may form a complex involved in macroautophagy.

It localises to the nucleus. It is found in the cytoplasm. The protein localises to the synapse. Its function is as follows. Plays a role in protein ubiquitination, sorting and degradation through its association with VCP. Involved in ubiquitin-mediated membrane proteins trafficking to late endosomes in an ESCRT-dependent manner, and hence plays a role in synaptic vesicle recycling. May play a role in macroautophagy, regulating for instance the clearance of damaged lysosomes. Plays a role in cerebellar Purkinje cell development. Positively regulates cytosolic and calcium-independent phospholipase A2 activities in a tumor necrosis factor alpha (TNF-alpha)- or lipopolysaccharide (LPS)-dependent manner, and hence prostaglandin E2 biosynthesis. This Homo sapiens (Human) protein is Phospholipase A-2-activating protein (PLAA).